The sequence spans 336 residues: Glycerol-3-phosphate dehydrogenase [NAD(P)+] (336 aa).

NADPH is bound by residues serine 11, tryptophan 12, arginine 32, and lysine 109. Sn-glycerol 3-phosphate-binding residues include lysine 109, glycine 140, and serine 142. Alanine 144 is a binding site for NADPH. Lysine 195, aspartate 248, serine 258, arginine 259, and asparagine 260 together coordinate sn-glycerol 3-phosphate. Lysine 195 functions as the Proton acceptor in the catalytic mechanism. Arginine 259 serves as a coordination point for NADPH. Residues valine 283 and glutamate 285 each coordinate NADPH.

It belongs to the NAD-dependent glycerol-3-phosphate dehydrogenase family.

The protein localises to the cytoplasm. It catalyses the reaction sn-glycerol 3-phosphate + NAD(+) = dihydroxyacetone phosphate + NADH + H(+). The enzyme catalyses sn-glycerol 3-phosphate + NADP(+) = dihydroxyacetone phosphate + NADPH + H(+). It functions in the pathway membrane lipid metabolism; glycerophospholipid metabolism. In terms of biological role, catalyzes the reduction of the glycolytic intermediate dihydroxyacetone phosphate (DHAP) to sn-glycerol 3-phosphate (G3P), the key precursor for phospholipid synthesis. The sequence is that of Glycerol-3-phosphate dehydrogenase [NAD(P)+] from Leuconostoc mesenteroides subsp. mesenteroides (strain ATCC 8293 / DSM 20343 / BCRC 11652 / CCM 1803 / JCM 6124 / NCDO 523 / NBRC 100496 / NCIMB 8023 / NCTC 12954 / NRRL B-1118 / 37Y).